Reading from the N-terminus, the 423-residue chain is Immunity-related GTPase family M protein 3 (423 aa).

Residues 83–260 (YRVKIAVTGD…PELRNTLQKD (178 aa)) enclose the IRG-type G domain. GTP-binding positions include 92–99 (DSGNGMSS), 117–121 (TGVVR), and 200–202 (KLD).

The protein belongs to the TRAFAC class dynamin-like GTPase superfamily. IRG family.

It localises to the endoplasmic reticulum. The protein resides in the cytoplasmic vesicle membrane. Its subcellular location is the lipid droplet. The catalysed reaction is GTP + H2O = GDP + phosphate + H(+). Immunity-related GTPase that plays important roles in host resistance to acute infection by protozoan, such as Toxoplasma gondii and Leishmania major. Acts as a dynamin-like protein that binds to intracellular membranes and promotes remodeling and trafficking of those membranes. Acts predominantly to restrict acute protozoan infection: expression is required in both hematopoietic and non-hematopoietic cellular compartments and is dependent on Stat1. Only plays a partial role in the control of latent Toxoplasma infection. Involved in the clearance of acute protozoan infections by regulating autophagy, possibly by promoting the fusion of phagosomes with lysosomes for efficient degradation of vacuoles containing parasites. Probably involved in membrane disruption of parasite-containing vacuoles. In addition to its role in resistance to acute infection by protozoan, also acts as a negative regulator of the integrated stress response (ISR) following coxsackievirus B3 infection. Promotes differentiation of activated CD8(+) T-cells. This is Immunity-related GTPase family M protein 3 from Mus musculus (Mouse).